We begin with the raw amino-acid sequence, 1034 residues long: Condensin complex subunit 3 (1034 aa).

HEAT repeat units lie at residues 95–132, 139–176, 178–213, 242–279, 281–317, 439–476, and 618–655; these read SPVNCLFNFLLQSHGASSMAVRFRVCQLINKLLVNLPE, DLFDKIHDAMLIRLKDRVPNVRIQAVLALARLQDPSDP, CPVSNAYVHLLENDSNPEVRRAVLTCIAPSAKSLPK, LTIAQRVKLLQQGLNDRSAAVKDVIQKKLIQAWLQYSE, DVLDLLHRLDVENSPEVSLSALNALFSVSPVGELVQN, TSLISSLAELLLFVLKDDDKRIQTVAEIISELREPIVT, and DFARQHLPLLLQILQLDEVKVKNSALNAVFDMLLLFGM. The segment covering 663 to 672 has biased composition (polar residues); sequence TNPDDSQCKA. The interval 663–693 is disordered; sequence TNPDDSQCKAQENADEDISEQEKPGSVDENL. HEAT repeat units lie at residues 703 to 740, 785 to 823, and 878 to 915; these read ATVNGILHLFSGFLDSEIAEIRTETAEGLVKLMFSGRL, CFAEAFLPTLQTLFNAPASSPLADVDVANVAELLVDLTR, and ENSTDLLPLLDCAVEDVTDKVCERAIEKVRSQLRSGRE. Basic and acidic residues predominate over residues 909 to 949; it reads QLRSGREEHRVSKETEPQVSKETEDRTNLQENEEGKQKDEA. The segment at 909–1034 is disordered; it reads QLRSGREEHR…LSKLLNEEAN (126 aa). Positions 964–984 are enriched in basic residues; that stretch reads RGKATKGRRKGPAAAATRRKA. Positions 985 to 999 are enriched in basic and acidic residues; that stretch reads SKAEEAEAEMERQEE.

This sequence belongs to the CND3 (condensin subunit 3) family. As to quaternary structure, component of the condensin complex, which contains the XCAP-E/SMC2 and XCAP-C/SMC4 heterodimer, and three non SMC subunits that probably regulate the complex: XCAP-H/NCAPH, XCAP-D2/NCAPD2 and XCAP-G/NCAPG. Phosphorylated by cdk1. Its phosphorylation, as well as that of XCAP-D2 and XCAP-H subunits, activates the condensin complex and is required for chromosome condensation.

The protein localises to the nucleus. Its subcellular location is the cytoplasm. The protein resides in the chromosome. Regulatory subunit of the condensin complex, a complex required for conversion of interphase chromatin into mitotic-like condense chromosomes. The condensin complex probably introduces positive supercoils into relaxed DNA in the presence of type I topoisomerases and converts nicked DNA into positive knotted forms in the presence of type II topoisomerase. The polypeptide is Condensin complex subunit 3 (ncapg) (Xenopus laevis (African clawed frog)).